Here is a 152-residue protein sequence, read N- to C-terminus: 3-dehydroquinate dehydratase (152 aa).

The active-site Proton acceptor is the Tyr-22. Substrate is bound by residues Asn-73, His-79, and Asp-86. The active-site Proton donor is His-99. Substrate is bound by residues 100 to 101 and Arg-110; that span reads LS.

It belongs to the type-II 3-dehydroquinase family. As to quaternary structure, homododecamer.

The catalysed reaction is 3-dehydroquinate = 3-dehydroshikimate + H2O. The protein operates within metabolic intermediate biosynthesis; chorismate biosynthesis; chorismate from D-erythrose 4-phosphate and phosphoenolpyruvate: step 3/7. In terms of biological role, catalyzes a trans-dehydration via an enolate intermediate. The polypeptide is 3-dehydroquinate dehydratase (Gemmatimonas aurantiaca (strain DSM 14586 / JCM 11422 / NBRC 100505 / T-27)).